The primary structure comprises 180 residues: UPF0227 protein YE1706 (180 aa).

This sequence belongs to the UPF0227 family.

This chain is UPF0227 protein YE1706, found in Yersinia enterocolitica serotype O:8 / biotype 1B (strain NCTC 13174 / 8081).